A 255-amino-acid polypeptide reads, in one-letter code: Serine/threonine-protein phosphatase PP1 (255 aa).

Residues aspartate 2, histidine 4, aspartate 30, and asparagine 62 each coordinate Mn(2+). Histidine 63 functions as the Proton donor in the catalytic mechanism. Residues histidine 111 and histidine 186 each coordinate Mn(2+).

It belongs to the PPP phosphatase family. PP-1 subfamily. It depends on Mn(2+) as a cofactor.

It catalyses the reaction O-phospho-L-seryl-[protein] + H2O = L-seryl-[protein] + phosphate. The catalysed reaction is O-phospho-L-threonyl-[protein] + H2O = L-threonyl-[protein] + phosphate. The protein is Serine/threonine-protein phosphatase PP1 of Brassica napus (Rape).